A 412-amino-acid polypeptide reads, in one-letter code: Glutamate-pyruvate aminotransferase AlaC (412 aa).

An N6-(pyridoxal phosphate)lysine modification is found at Lys244.

This sequence belongs to the class-I pyridoxal-phosphate-dependent aminotransferase family. As to quaternary structure, homodimer. It depends on pyridoxal 5'-phosphate as a cofactor.

It is found in the cytoplasm. It carries out the reaction L-alanine + 2-oxoglutarate = pyruvate + L-glutamate. It functions in the pathway amino-acid biosynthesis; L-alanine biosynthesis. Involved in the biosynthesis of alanine. Catalyzes the transamination of pyruvate by glutamate, leading to the formation of L-alanine and 2-oxoglutarate. Is also able to catalyze the reverse reaction. This chain is Glutamate-pyruvate aminotransferase AlaC, found in Escherichia coli (strain K12).